The following is a 544-amino-acid chain: Lipid II flippase MurJ (544 aa).

Helical transmembrane passes span I21–L41, Y49–S69, V90–A110, V127–V147, I169–G189, V191–V211, M241–L261, L297–T317, T338–Y358, I375–I395, F404–I424, G431–I451, V471–I491, and A500–Y520.

It belongs to the polysaccharide synthase family.

It localises to the cell membrane. Its pathway is cell wall biogenesis; peptidoglycan biosynthesis. In terms of biological role, involved in peptidoglycan biosynthesis. Transports lipid-linked peptidoglycan precursors from the inner to the outer leaflet of the cytoplasmic membrane. Not essential for growth. The polypeptide is Lipid II flippase MurJ (Bacillus subtilis (strain 168)).